The primary structure comprises 428 residues: Adenylosuccinate synthetase (428 aa).

Residues 12 to 18 and 40 to 42 each bind GTP; these read GDEGKGK and GHT. The active-site Proton acceptor is D13. Residues D13 and G40 each contribute to the Mg(2+) site. Residues 13–16, 38–41, T128, R142, Q223, T238, and R302 contribute to the IMP site; these read DEGK and NAGH. H41 acts as the Proton donor in catalysis. 298–304 is a binding site for substrate; it reads VTTGRPR. Residues R304, 330 to 332, and 412 to 414 contribute to the GTP site; these read KLD and GVG.

It belongs to the adenylosuccinate synthetase family. Homodimer. The cofactor is Mg(2+).

The protein localises to the cytoplasm. The catalysed reaction is IMP + L-aspartate + GTP = N(6)-(1,2-dicarboxyethyl)-AMP + GDP + phosphate + 2 H(+). It functions in the pathway purine metabolism; AMP biosynthesis via de novo pathway; AMP from IMP: step 1/2. Its function is as follows. Plays an important role in the de novo pathway of purine nucleotide biosynthesis. Catalyzes the first committed step in the biosynthesis of AMP from IMP. This Halothermothrix orenii (strain H 168 / OCM 544 / DSM 9562) protein is Adenylosuccinate synthetase.